A 343-amino-acid polypeptide reads, in one-letter code: Mitotic checkpoint protein bub-3 (343 aa).

WD repeat units follow at residues 21–62 (PPFV…DISE), 67–105 (THGKPLLTCTFAGYNKVAFGGVDHNVKLADIETGNGTQL), 107–146 (SHALAVRCMEFNPMSSLIVSGGWDSSVKLWDARSYGNGAI), 150–187 (NVSSSVYAMDVLKHTILVGTKDRKIFMYDSRKLREPLQ), 192–232 (PLKY…EMMK), 249–288 (ELIHPVHTVAFHPKYGTFATGGADGIVNIWDPFNRKRIIQ), and 291–331 (KFET…NSIT). The disordered stretch occupies residues 322–343 (PSPLPNNSITIRHITDPESRPK). A compositionally biased stretch (basic and acidic residues) spans 334–343 (HITDPESRPK).

It belongs to the WD repeat BUB3 family. In terms of assembly, may interact with bub-1; for localization at the kinetochore and the onset of anaphase.

Its subcellular location is the chromosome. The protein resides in the centromere. It localises to the kinetochore. The protein localises to the nucleus. Its function is as follows. Has a dual function in spindle-assembly checkpoint signaling and in promoting the establishment of correct kinetochore-microtubule (K-MT) attachments. Promotes the formation of stable end-on bipolar attachments of chromosomes. Necessary for expression and kinetochore localization of bub-1. Plays a role in synapsis checkpoint signaling inducing apoptosis in response to unsynapsed chromosomes and thus controlling chromosomal segregation during oocyte meiosis. This is Mitotic checkpoint protein bub-3 from Caenorhabditis elegans.